Reading from the N-terminus, the 501-residue chain is Glycogen synthase 1 (501 aa).

Position 18 (Lys18) interacts with ADP-alpha-D-glucose.

This sequence belongs to the glycosyltransferase 1 family. Bacterial/plant glycogen synthase subfamily.

It carries out the reaction [(1-&gt;4)-alpha-D-glucosyl](n) + ADP-alpha-D-glucose = [(1-&gt;4)-alpha-D-glucosyl](n+1) + ADP + H(+). The protein operates within glycan biosynthesis; glycogen biosynthesis. Its function is as follows. Synthesizes alpha-1,4-glucan chains using ADP-glucose. This Geobacter sulfurreducens (strain ATCC 51573 / DSM 12127 / PCA) protein is Glycogen synthase 1.